The sequence spans 158 residues: Lipoprotein signal peptidase (158 aa).

4 consecutive transmembrane segments (helical) span residues 7–27 (LFWIAAFIAFFLDQITKYWVV), 38–58 (LLTGIFHFTYVTNTGAAFSLL), 68–88 (LSLGVSLVLIALALFGPTLNL), and 92–112 (LGYGLILGGAMGNGIDRFVLG). Active-site residues include Asp-116 and Asp-132. Residues 125 to 145 (FPVFNVADSFISIGIVFLLIA) traverse the membrane as a helical segment.

Belongs to the peptidase A8 family.

It is found in the cell inner membrane. The catalysed reaction is Release of signal peptides from bacterial membrane prolipoproteins. Hydrolyzes -Xaa-Yaa-Zaa-|-(S,diacylglyceryl)Cys-, in which Xaa is hydrophobic (preferably Leu), and Yaa (Ala or Ser) and Zaa (Gly or Ala) have small, neutral side chains.. It functions in the pathway protein modification; lipoprotein biosynthesis (signal peptide cleavage). In terms of biological role, this protein specifically catalyzes the removal of signal peptides from prolipoproteins. In Nostoc punctiforme (strain ATCC 29133 / PCC 73102), this protein is Lipoprotein signal peptidase.